Consider the following 463-residue polypeptide: UDP-N-acetylmuramoyl-L-alanyl-D-glutamate--2,6-diaminopimelate ligase (463 aa).

Residue threonine 21 coordinates UDP-N-acetyl-alpha-D-muramoyl-L-alanyl-D-glutamate. ATP is bound at residue 94–100 (GTNGKTT). Residues 137–138 (TT), serine 164, glutamine 170, and arginine 172 each bind UDP-N-acetyl-alpha-D-muramoyl-L-alanyl-D-glutamate. An N6-carboxylysine modification is found at lysine 204. Meso-2,6-diaminopimelate contacts are provided by residues arginine 358, 382 to 385 (DNPR), glycine 433, and glutamate 437. The short motif at 382-385 (DNPR) is the Meso-diaminopimelate recognition motif element.

It belongs to the MurCDEF family. MurE subfamily. It depends on Mg(2+) as a cofactor. Carboxylation is probably crucial for Mg(2+) binding and, consequently, for the gamma-phosphate positioning of ATP.

The protein resides in the cytoplasm. The enzyme catalyses UDP-N-acetyl-alpha-D-muramoyl-L-alanyl-D-glutamate + meso-2,6-diaminopimelate + ATP = UDP-N-acetyl-alpha-D-muramoyl-L-alanyl-gamma-D-glutamyl-meso-2,6-diaminopimelate + ADP + phosphate + H(+). The protein operates within cell wall biogenesis; peptidoglycan biosynthesis. Catalyzes the addition of meso-diaminopimelic acid to the nucleotide precursor UDP-N-acetylmuramoyl-L-alanyl-D-glutamate (UMAG) in the biosynthesis of bacterial cell-wall peptidoglycan. The chain is UDP-N-acetylmuramoyl-L-alanyl-D-glutamate--2,6-diaminopimelate ligase from Helicobacter hepaticus (strain ATCC 51449 / 3B1).